We begin with the raw amino-acid sequence, 117 residues long: uncharacterized protein (117 aa).

The first 23 residues, 1 to 23 (MVSEAEFMAALAKFAETSATASA), serve as a signal peptide directing secretion.

This is an uncharacterized protein from Archaeoglobus fulgidus (strain ATCC 49558 / DSM 4304 / JCM 9628 / NBRC 100126 / VC-16).